Reading from the N-terminus, the 1087-residue chain is Kinesin-like protein KIN-14F (1087 aa).

The 110-residue stretch at 1–110 (MDQGAMETLP…CILCLKGFYE (110 aa)) folds into the Calponin-homology (CH) domain. The interval 136-155 (SSPPQYGIGSESTTDESVSL) is disordered. Residues 377–705 (TIRVYCRVRP…LKFAQRVASI (329 aa)) form the Kinesin motor domain. Position 461–468 (461–468 (GQTGSGKT)) interacts with ATP. A coiled-coil region spans residues 710 to 749 (ARSNKETGEIRDLKDEISSLKSAMEKKEAELEQLRSGSIR). Disordered stretches follow at residues 740 to 858 (LEQL…PVSR), 923 to 949 (QGGVKKTRAESSKAKAKQPSPARFQKL), and 1004 to 1087 (DSTL…FMVP). Polar residues-rich tracts occupy residues 744 to 754 (RSGSIRNTTEC), 780 to 797 (PQPNDGTRSYETRSCSTG), and 836 to 856 (TDRASTIKSRNKPDVTQNLPV). The span at 1017 to 1033 (EPPSKSKNAQRNSSKNS) shows a compositional bias: polar residues. Residues 1042–1054 (YAHEDTSLVDDKP) show a composition bias toward basic and acidic residues. A compositionally biased stretch (basic residues) spans 1076 to 1087 (SRSTHHARFMVP).

This sequence belongs to the TRAFAC class myosin-kinesin ATPase superfamily. Kinesin family. KIN-14 subfamily. In terms of assembly, interacts (via C-terminus) with VDAC3. Expressed in roots, leaves, stems and flowers (at protein level).

Its subcellular location is the cytoplasm. The protein resides in the cytoskeleton. The protein localises to the mitochondrion. In terms of biological role, required for keeping the ATP levels stable and balancing the aerobic respiration pathways during seed germination at low temperature. In Arabidopsis thaliana (Mouse-ear cress), this protein is Kinesin-like protein KIN-14F.